Here is a 102-residue protein sequence, read N- to C-terminus: Small integral membrane protein 29 (102 aa).

Asn3 carries an N-linked (GlcNAc...) asparagine glycan. Residues 21–41 traverse the membrane as a helical segment; the sequence is VLGPFFLITLVGVVVAVVMYV.

It is found in the membrane. This is Small integral membrane protein 29 from Mus musculus (Mouse).